The chain runs to 1429 residues: Dicer-like protein 2 (1429 aa).

The region spanning Met21 to Cys200 is the Helicase ATP-binding domain. Position 34–41 (Met34–Thr41) interacts with ATP. Positions Asp141 to His144 match the DEAH box motif. The 167-residue stretch at Ala335–Arg501 folds into the Helicase C-terminal domain. One can recognise a Dicer dsRNA-binding fold domain in the interval Ala528 to Thr622. RNase III domains lie at Ala874–Gly1014 and Gln1056–Gly1250. 3 residues coordinate Mg(2+): Glu1095, Asp1236, and Glu1239.

Belongs to the helicase family. Dicer subfamily. Mg(2+) serves as cofactor. The cofactor is Mn(2+).

In terms of biological role, dicer-like endonuclease involved in cleaving double-stranded RNA in the RNA interference (RNAi) pathway. Produces 21 to 25 bp dsRNAs (siRNAs) which target the selective destruction of homologous RNAs leading to sequence-specific suppression of gene expression, called post-transcriptional gene silencing (PTGS). Part of a broad host defense response against viral infection and transposons. The sequence is that of Dicer-like protein 2 (dcl2) from Emericella nidulans (strain FGSC A4 / ATCC 38163 / CBS 112.46 / NRRL 194 / M139) (Aspergillus nidulans).